The primary structure comprises 454 residues: Bifunctional protein GlmU (454 aa).

The interval 1 to 226 is pyrophosphorylase; it reads MSTTVIILAA…AFEVEGVNDR (226 aa). UDP-N-acetyl-alpha-D-glucosamine contacts are provided by residues 8–11, Lys22, Gln73, 78–79, 100–102, Gly137, Glu151, Asn166, and Asn224; these read LAAG, GT, and YGD. Asp102 serves as a coordination point for Mg(2+). Mg(2+) is bound at residue Asn224. The tract at residues 227–247 is linker; it reads LQLAALEREFQKQQAKELMQQ. Positions 248–454 are N-acetyltransferase; it reads GVTFADPARF…NYQRPQKLKK (207 aa). Residues Arg330 and Lys348 each coordinate UDP-N-acetyl-alpha-D-glucosamine. Residue His360 is the Proton acceptor of the active site. UDP-N-acetyl-alpha-D-glucosamine contacts are provided by Tyr363 and Asn374. Residues Ala377, 383-384, Ser402, Ala420, and Arg437 each bind acetyl-CoA; that span reads NY.

In the N-terminal section; belongs to the N-acetylglucosamine-1-phosphate uridyltransferase family. The protein in the C-terminal section; belongs to the transferase hexapeptide repeat family. Homotrimer. Requires Mg(2+) as cofactor.

It localises to the cytoplasm. The enzyme catalyses alpha-D-glucosamine 1-phosphate + acetyl-CoA = N-acetyl-alpha-D-glucosamine 1-phosphate + CoA + H(+). It catalyses the reaction N-acetyl-alpha-D-glucosamine 1-phosphate + UTP + H(+) = UDP-N-acetyl-alpha-D-glucosamine + diphosphate. Its pathway is nucleotide-sugar biosynthesis; UDP-N-acetyl-alpha-D-glucosamine biosynthesis; N-acetyl-alpha-D-glucosamine 1-phosphate from alpha-D-glucosamine 6-phosphate (route II): step 2/2. It functions in the pathway nucleotide-sugar biosynthesis; UDP-N-acetyl-alpha-D-glucosamine biosynthesis; UDP-N-acetyl-alpha-D-glucosamine from N-acetyl-alpha-D-glucosamine 1-phosphate: step 1/1. It participates in bacterial outer membrane biogenesis; LPS lipid A biosynthesis. In terms of biological role, catalyzes the last two sequential reactions in the de novo biosynthetic pathway for UDP-N-acetylglucosamine (UDP-GlcNAc). The C-terminal domain catalyzes the transfer of acetyl group from acetyl coenzyme A to glucosamine-1-phosphate (GlcN-1-P) to produce N-acetylglucosamine-1-phosphate (GlcNAc-1-P), which is converted into UDP-GlcNAc by the transfer of uridine 5-monophosphate (from uridine 5-triphosphate), a reaction catalyzed by the N-terminal domain. The chain is Bifunctional protein GlmU from Acinetobacter baumannii (strain AYE).